We begin with the raw amino-acid sequence, 744 residues long: Phosphoribosylformylglycinamidine synthase subunit PurL (744 aa).

His45 is a catalytic residue. ATP is bound by residues Tyr48 and Lys87. Glu89 contributes to the Mg(2+) binding site. Residues 90–93 (SHNH) and Arg112 contribute to the substrate site. The active-site Proton acceptor is the His91. Asp113 contacts Mg(2+). Gln236 lines the substrate pocket. Residue Asp264 participates in Mg(2+) binding. Position 308-310 (308-310 (ESQ)) interacts with substrate. 2 residues coordinate ATP: Asn492 and Gly529. Residue Asn530 coordinates Mg(2+). Ser532 provides a ligand contact to substrate.

The protein belongs to the FGAMS family. As to quaternary structure, monomer. Part of the FGAM synthase complex composed of 1 PurL, 1 PurQ and 2 PurS subunits.

The protein localises to the cytoplasm. It carries out the reaction N(2)-formyl-N(1)-(5-phospho-beta-D-ribosyl)glycinamide + L-glutamine + ATP + H2O = 2-formamido-N(1)-(5-O-phospho-beta-D-ribosyl)acetamidine + L-glutamate + ADP + phosphate + H(+). It participates in purine metabolism; IMP biosynthesis via de novo pathway; 5-amino-1-(5-phospho-D-ribosyl)imidazole from N(2)-formyl-N(1)-(5-phospho-D-ribosyl)glycinamide: step 1/2. Functionally, part of the phosphoribosylformylglycinamidine synthase complex involved in the purines biosynthetic pathway. Catalyzes the ATP-dependent conversion of formylglycinamide ribonucleotide (FGAR) and glutamine to yield formylglycinamidine ribonucleotide (FGAM) and glutamate. The FGAM synthase complex is composed of three subunits. PurQ produces an ammonia molecule by converting glutamine to glutamate. PurL transfers the ammonia molecule to FGAR to form FGAM in an ATP-dependent manner. PurS interacts with PurQ and PurL and is thought to assist in the transfer of the ammonia molecule from PurQ to PurL. In Erythrobacter litoralis (strain HTCC2594), this protein is Phosphoribosylformylglycinamidine synthase subunit PurL.